We begin with the raw amino-acid sequence, 85 residues long: MTKREYNSQPEMLEGAKLIGAGAATIALAGAAIGIGNVFSSLIHSVARNPSLAKQLFGYAILGFALTEAIALFALMMAFLILFVF.

Transmembrane regions (helical) follow at residues 19–39 and 61–81; these read IGAGAATIALAGAAIGIGNVF and ILGFALTEAIALFALMMAFLI.

The protein belongs to the ATPase C chain family. As to quaternary structure, F-type ATPases have 2 components, CF(1) - the catalytic core - and CF(0) - the membrane proton channel. CF(1) has five subunits: alpha(3), beta(3), gamma(1), delta(1), epsilon(1). CF(0) has three main subunits: a, b and c.

The protein localises to the mitochondrion membrane. In terms of biological role, this protein is one of the chains of the nonenzymatic membrane component (F0) of mitochondrial ATPase. The polypeptide is ATP synthase subunit 9, mitochondrial (ATP9) (Arabidopsis thaliana (Mouse-ear cress)).